The primary structure comprises 316 residues: Melanocyte-stimulating hormone receptor (316 aa).

At 1 to 37 (MPMQGAQRKLLGSLNSTPTATSNLGLAANHTGAPCLE) the chain is on the extracellular side. N-linked (GlcNAc...) asparagine glycosylation occurs at Asn-29. Residues 38–63 (VSIPDGLFLSLGLVSLVENMLVVAAI) form a helical membrane-spanning segment. Topologically, residues 64–72 (AKNRNLHSP) are cytoplasmic. The chain crosses the membrane as a helical span at residues 73 to 93 (MYCFICCLALSDLLVSGSNML). Residues 94–118 (ETAVVVLLEAGALATRASVVQQLHN) are Extracellular-facing. Residues 119–140 (TIDVLTYSSMLCSLCFVGAIAV) traverse the membrane as a helical segment. Over 141 to 163 (DRYISIFYALRYHSIMTLPRVQR) the chain is Cytoplasmic. The helical transmembrane segment at 164–183 (VIAAIWVASVTSSTLFITYY) threads the bilayer. Topologically, residues 184-191 (EHVVALLC) are extracellular. A helical transmembrane segment spans residues 192-210 (LVVFLTMLVLMAVLYVHML). Over 211-239 (ARACQHAQGITRLHKRQPPAHQGFGLRGA) the chain is Cytoplasmic. Residues 240-265 (ATLTILLGIFFLCWGPFFLHLTLVVF) traverse the membrane as a helical segment. Residues 266–278 (CPQHLTCSCIFKN) lie on the Extracellular side of the membrane. A helical membrane pass occupies residues 279–299 (FKVFLTLIICNTIIDPLIYAF). Topologically, residues 300 to 316 (RSQELCRTLKEVLLCSW) are cytoplasmic. Cys-314 is lipidated: S-palmitoyl cysteine.

Belongs to the G-protein coupled receptor 1 family. Interacts with MGRN1, but does not undergo MGRN1-mediated ubiquitination; this interaction competes with GNAS-binding and thus inhibits agonist-induced cAMP production. Interacts with OPN3; the interaction results in a decrease in MC1R-mediated cAMP signaling and ultimately a decrease in melanin production in melanocytes.

It localises to the cell membrane. Receptor for MSH (alpha, beta and gamma) and ACTH. The activity of this receptor is mediated by G proteins which activate adenylate cyclase. Mediates melanogenesis, the production of eumelanin (black/brown) and phaeomelanin (red/yellow), via regulation of cAMP signaling in melanocytes. The sequence is that of Melanocyte-stimulating hormone receptor (MC1R) from Cebus albifrons (White-fronted capuchin).